We begin with the raw amino-acid sequence, 244 residues long: Putative membrane peptidase YdiL (244 aa).

The next 6 helical transmembrane spans lie at 7–27 (FIILTYIIMQFSALIAIPLLF), 44–64 (AQGLWSVISFIACLVVVLLIL), 80–100 (IGLSILWAIAGFFIALFSQGI), 127–147 (AVPLMIIVSSIVGPILEEIIF), 159–179 (TNFFFAGLISSVIFGIVHADL), and 202–222 (IWVPIFAHLMMNTFVVIMQLE). Residues Glu-143 and His-176 each act as proton donor/acceptor in the active site.

Belongs to the peptidase U48 family.

The protein localises to the cell membrane. Functionally, may function as endopeptidase which proteolytically removes the C-terminal three residues of farnesylated peptides containing the CAAX motif where C is cysteine, A is an aliphatic amino acid and X is any amino acid. This Bacillus subtilis (strain 168) protein is Putative membrane peptidase YdiL (ydiL).